A 502-amino-acid polypeptide reads, in one-letter code: Thermosome subunit beta (502 aa).

This sequence belongs to the TCP-1 chaperonin family. Forms a Heterooligomeric complex of two stacked eight-membered rings.

Molecular chaperone; binds unfolded polypeptides in vitro, and has a weak ATPase activity. The chain is Thermosome subunit beta (thsB) from Desulfurococcus mucosus (Desulfurococcus mobilis).